A 172-amino-acid chain; its full sequence is Adenine phosphoribosyltransferase (172 aa).

It belongs to the purine/pyrimidine phosphoribosyltransferase family. As to quaternary structure, homodimer.

The protein localises to the cytoplasm. It catalyses the reaction AMP + diphosphate = 5-phospho-alpha-D-ribose 1-diphosphate + adenine. It functions in the pathway purine metabolism; AMP biosynthesis via salvage pathway; AMP from adenine: step 1/1. Functionally, catalyzes a salvage reaction resulting in the formation of AMP, that is energically less costly than de novo synthesis. This Pediococcus pentosaceus (strain ATCC 25745 / CCUG 21536 / LMG 10740 / 183-1w) protein is Adenine phosphoribosyltransferase.